The chain runs to 111 residues: Dormancy-associated protein 1 (111 aa).

The segment at Lys-30–Ala-60 is disordered. The segment covering Ser-41–Ser-59 has biased composition (low complexity).

The protein belongs to the DRM1/ARP family. As to expression, expressed in axilary buds and in non-growing stems and roots. Detected in sepals, stamens and carpels, but barely detected in petals or leaflets.

This chain is Dormancy-associated protein 1, found in Pisum sativum (Garden pea).